Consider the following 81-residue polypeptide: Small ribosomal subunit protein bS16 (81 aa).

Belongs to the bacterial ribosomal protein bS16 family.

The sequence is that of Small ribosomal subunit protein bS16 from Clostridium beijerinckii (strain ATCC 51743 / NCIMB 8052) (Clostridium acetobutylicum).